The chain runs to 77 residues: Putative Fis-like DNA-binding protein (77 aa).

A DNA-binding region (H-T-H motif) is located at residues 53–72; it reads QSLAADYLGINRNTLRKKLQ.

Belongs to the transcriptional regulatory Fis family.

This chain is Putative Fis-like DNA-binding protein, found in Ralstonia nicotianae (strain ATCC BAA-1114 / GMI1000) (Ralstonia solanacearum).